Consider the following 256-residue polypeptide: uncharacterized protein (256 aa).

3 helical membrane-spanning segments follow: residues 42-62, 73-93, and 108-128; these read LIAL…IWFF, FFTL…LIFL, and WLFL…WLIV.

It localises to the cell membrane. This is an uncharacterized protein from Mycoplasma genitalium (strain ATCC 33530 / DSM 19775 / NCTC 10195 / G37) (Mycoplasmoides genitalium).